Here is a 425-residue protein sequence, read N- to C-terminus: Dihydroorotase (425 aa).

The Zn(2+) site is built by His61 and His63. Residues 63 to 65 and Asn95 contribute to the substrate site; that span reads HLR. Residues Asp153, His180, and His233 each contribute to the Zn(2+) site. Substrate is bound at residue Asn279. A Zn(2+)-binding site is contributed by Asp306. The active site involves Asp306. A substrate-binding site is contributed by His310.

Belongs to the metallo-dependent hydrolases superfamily. DHOase family. Class I DHOase subfamily. It depends on Zn(2+) as a cofactor.

The enzyme catalyses (S)-dihydroorotate + H2O = N-carbamoyl-L-aspartate + H(+). It functions in the pathway pyrimidine metabolism; UMP biosynthesis via de novo pathway; (S)-dihydroorotate from bicarbonate: step 3/3. Catalyzes the reversible cyclization of carbamoyl aspartate to dihydroorotate. The protein is Dihydroorotase of Geotalea daltonii (strain DSM 22248 / JCM 15807 / FRC-32) (Geobacter daltonii).